The sequence spans 310 residues: Ribosomal RNA small subunit methyltransferase H (310 aa).

S-adenosyl-L-methionine contacts are provided by residues 33–35 (AGH), Asp53, Phe79, Asp100, and Gln107.

It belongs to the methyltransferase superfamily. RsmH family.

The protein localises to the cytoplasm. It carries out the reaction cytidine(1402) in 16S rRNA + S-adenosyl-L-methionine = N(4)-methylcytidine(1402) in 16S rRNA + S-adenosyl-L-homocysteine + H(+). Functionally, specifically methylates the N4 position of cytidine in position 1402 (C1402) of 16S rRNA. The sequence is that of Ribosomal RNA small subunit methyltransferase H from Clostridium botulinum (strain Alaska E43 / Type E3).